The chain runs to 260 residues: Ubiquinone/menaquinone biosynthesis C-methyltransferase UbiE (260 aa).

S-adenosyl-L-methionine contacts are provided by residues Thr-83, Asp-104, and 132 to 133 (NA).

It belongs to the class I-like SAM-binding methyltransferase superfamily. MenG/UbiE family.

The catalysed reaction is a 2-demethylmenaquinol + S-adenosyl-L-methionine = a menaquinol + S-adenosyl-L-homocysteine + H(+). The enzyme catalyses a 2-methoxy-6-(all-trans-polyprenyl)benzene-1,4-diol + S-adenosyl-L-methionine = a 5-methoxy-2-methyl-3-(all-trans-polyprenyl)benzene-1,4-diol + S-adenosyl-L-homocysteine + H(+). Its pathway is quinol/quinone metabolism; menaquinone biosynthesis; menaquinol from 1,4-dihydroxy-2-naphthoate: step 2/2. The protein operates within cofactor biosynthesis; ubiquinone biosynthesis. Functionally, methyltransferase required for the conversion of demethylmenaquinol (DMKH2) to menaquinol (MKH2) and the conversion of 2-polyprenyl-6-methoxy-1,4-benzoquinol (DDMQH2) to 2-polyprenyl-3-methyl-6-methoxy-1,4-benzoquinol (DMQH2). The chain is Ubiquinone/menaquinone biosynthesis C-methyltransferase UbiE from Bartonella bacilliformis (strain ATCC 35685 / KC583 / Herrer 020/F12,63).